We begin with the raw amino-acid sequence, 710 residues long: Pentatricopeptide repeat-containing protein At1g02060, chloroplastic (710 aa).

Residues 1 to 21 (MVSSVPKLHALFVSKSQPVLR) constitute a chloroplast transit peptide. PPR repeat units follow at residues 137–171 (QDRYFNSLIRSYGNAGLFQESVKLFQTMKQMGISP), 172–202 (SVLTFNSLLSILLKRGRTGMAHDLFDEMRRT), 208–242 (DSYTFNTLINGFCKNSMVDEAFRIFKDMELYHCNP), 243–277 (DVVTYNTIIDGLCRAGKVKIAHNVLSGMLKKATDV), 280–314 (NVVSYTTLVRGYCMKQEIDEAVLVFHDMLSRGLKP), 315–351 (NAVTYNTLIKGLSEAHRYDEIKDILIGGNDAFTTFAP), 352–386 (DACTFNILIKAHCDAGHLDAAMKVFQEMLNMKLHP), 387–421 (DSASYSVLIRTLCMRNEFDRAETLFNELFEKEVLL), 429–459 (LAAAYNPMFEYLCANGKTKQAEKVFRQLMKR), 463–497 (DPPSYKTLITGHCREGKFKPAYELLVLMLRREFVP), 498–532 (DLETYELLIDGLLKIGEALLAHDTLQRMLRSSYLP), and 533–567 (VATTFHSVLAELAKRKFANESFCLVTLMLEKRIRQ).

This sequence belongs to the PPR family. P subfamily.

It is found in the plastid. Its subcellular location is the chloroplast. This chain is Pentatricopeptide repeat-containing protein At1g02060, chloroplastic, found in Arabidopsis thaliana (Mouse-ear cress).